Reading from the N-terminus, the 180-residue chain is Translation machinery-associated protein 16 homolog (180 aa).

Over residues 1 to 12 (MTNLRKELEKCK) the composition is skewed to basic and acidic residues. Positions 1-32 (MTNLRKELEKCKHPNSRKTKALGKKARRQNNK) are disordered. A compositionally biased stretch (basic residues) spans 13-32 (HPNSRKTKALGKKARRQNNK).

This sequence belongs to the TMA16 family.

This chain is Translation machinery-associated protein 16 homolog, found in Drosophila melanogaster (Fruit fly).